Reading from the N-terminus, the 195-residue chain is Shikimate kinase (195 aa).

30–35 (GAGKTA) lines the ATP pocket. Residue threonine 34 coordinates Mg(2+). Substrate-binding residues include aspartate 52, arginine 76, and glycine 98. Arginine 136 provides a ligand contact to ATP. Arginine 155 contributes to the substrate binding site.

Belongs to the shikimate kinase family. Monomer. Mg(2+) serves as cofactor.

It is found in the cytoplasm. It catalyses the reaction shikimate + ATP = 3-phosphoshikimate + ADP + H(+). The protein operates within metabolic intermediate biosynthesis; chorismate biosynthesis; chorismate from D-erythrose 4-phosphate and phosphoenolpyruvate: step 5/7. Its function is as follows. Catalyzes the specific phosphorylation of the 3-hydroxyl group of shikimic acid using ATP as a cosubstrate. This is Shikimate kinase from Ruegeria pomeroyi (strain ATCC 700808 / DSM 15171 / DSS-3) (Silicibacter pomeroyi).